We begin with the raw amino-acid sequence, 362 residues long: Ferrochelatase (362 aa).

Residues His-212 and Glu-294 each coordinate Fe cation.

The protein belongs to the ferrochelatase family.

It localises to the cytoplasm. The enzyme catalyses heme b + 2 H(+) = protoporphyrin IX + Fe(2+). It functions in the pathway porphyrin-containing compound metabolism; protoheme biosynthesis; protoheme from protoporphyrin-IX: step 1/1. Functionally, catalyzes the ferrous insertion into protoporphyrin IX. In Leptospira biflexa serovar Patoc (strain Patoc 1 / Ames), this protein is Ferrochelatase.